A 30-amino-acid polypeptide reads, in one-letter code: Trypsin inhibitor 3 (30 aa).

Gln1 bears the Pyrrolidone carboxylic acid mark. 3 cysteine pairs are disulfide-bonded: Cys4–Cys21, Cys11–Cys23, and Cys17–Cys29.

It is found in the secreted. In terms of biological role, inhibits trypsin; probably participates in a plant defense mechanism. The sequence is that of Trypsin inhibitor 3 from Momordica cochinchinensis (Spiny bitter cucumber).